Consider the following 302-residue polypeptide: tRNA pseudouridine synthase B (302 aa).

The active-site Nucleophile is D47.

It belongs to the pseudouridine synthase TruB family. Type 1 subfamily.

The catalysed reaction is uridine(55) in tRNA = pseudouridine(55) in tRNA. Its function is as follows. Responsible for synthesis of pseudouridine from uracil-55 in the psi GC loop of transfer RNAs. The chain is tRNA pseudouridine synthase B from Ruegeria sp. (strain TM1040) (Silicibacter sp.).